We begin with the raw amino-acid sequence, 412 residues long: G-protein coupled receptor homolog UL33 (412 aa).

Over 1–29 (MDTIIHNSTRNNTPPHINDTCNMTGPLFA) the chain is Virion surface. N7, N18, and N22 each carry an N-linked (GlcNAc...) asparagine; by host glycan. A helical transmembrane segment spans residues 30–54 (IRTTEAVLNTFIIFVGGPLNAIVLI). The Intravirion segment spans residues 55–70 (TQLLTNRVLGYSTPTI). The helical transmembrane segment at 71 to 95 (YMTNLYSTNFLTLTVLPFIVLSNQW) threads the bilayer. The Virion surface segment spans residues 96–102 (LLPAGVA). The chain crosses the membrane as a helical span at residues 103 to 129 (SCKFLSVIYYSSCTVGFATVALIAADR). A disulfide bridge links C104 with C188. Topologically, residues 130-138 (YRVLHKRTY) are intravirion. A helical membrane pass occupies residues 139-160 (ARQSYRSTYMILLLTWLAGLIF). Over 161 to 203 (SVPAAVYTTVVMHHDANDTNNTNGHATCVLYFVAEEVHTVLLS) the chain is Virion surface. N-linked (GlcNAc...) asparagine; by host glycosylation is found at N177 and N180. Residues 204–224 (WKVLLTMVWGAAPVIMMTWFY) traverse the membrane as a helical segment. Residues 225 to 240 (AFFYSTVQRTSQKQRS) lie on the Intravirion side of the membrane. A helical transmembrane segment spans residues 241-267 (RTLTFVSVLLISFVALQTPYVSLMIFN). Topologically, residues 268–281 (SYATTAWPMQCEHL) are virion surface. A helical transmembrane segment spans residues 282–305 (TLRRTIGTLARVVPHLHCLINPIL). The Intravirion portion of the chain corresponds to 306–412 (YALLGHDFLQ…SQSHHNLSGV (107 aa)). The disordered stretch occupies residues 377–412 (NFPSGTWKGGQKTASNDTSTKIPHRLSQSHHNLSGV). Positions 388-397 (KTASNDTSTK) are enriched in polar residues.

This sequence belongs to the G-protein coupled receptor 1 family. In terms of assembly, heterodimerizes with US28.

Its subcellular location is the virion. The protein resides in the host cell membrane. The protein localises to the host cytoplasm. In terms of biological role, G-protein-coupled receptor (vGPCR) that constitutively activates multiple oncogenic signaling pathways including STAT3, AP-1, phospholipase C, NF-kappa-B or cAMP-responsive element (CRE) pathways. Plays an important role in viral reactivation from latency through activation of host CREB1, facilitating its recruitment to the viral major immediate early (MIE) genes. In turn, expression of the MIE-driven genes such as UL123 are de-repressed. Also facilitates virus dissemination via the extracellular and cell-to-cell route. The polypeptide is G-protein coupled receptor homolog UL33 (UL33) (Human cytomegalovirus (strain AD169) (HHV-5)).